The sequence spans 185 residues: MADHLMLAEGYSLVPRPPPAAPAHGPHALRTLQPYSSPGLDSGLRPRGAPLGPPPPPQGTVAYGAFGPSPTFQPFPAVPPPAAGNAHLQPVATLYPGRATMPPGAPGGPSGPQPAPGAPAPPLQPPAHALGGMDAELIDEEALTSLELELGLHRVRDLPELFLGQSEFDCFSDLGSAPPAGSVSC.

Disordered stretches follow at residues 15-64 (PRPP…VAYG) and 95-130 (YPGR…AHAL). The span at 103 to 125 (PGAPGGPSGPQPAPGAPAPPLQP) shows a compositional bias: pro residues.

This sequence belongs to the CITED family. As to quaternary structure, interacts via its C-terminal region with the CH1 domain of CREBBP and EP300. Interacts with all TFAP2/AP-2 isoforms.

It is found in the nucleus. The protein localises to the cytoplasm. In terms of biological role, acts as a transcriptional coactivator for TFAP2/AP-2. Enhances estrogen-dependent transactivation mediated by estrogen receptors. May function as an inhibitor of transactivation by HIF1A by disrupting HIF1A interaction with CREBBP. May be involved in regulation of gene expression during development and differentiation of blood cells, endothelial cells and mammary epithelial cells. This Bos taurus (Bovine) protein is Cbp/p300-interacting transactivator 4 (CITED4).